The chain runs to 636 residues: 1,4-alpha-glucan branching enzyme GlgB (636 aa).

The Nucleophile role is filled by D309. The active-site Proton donor is the E362.

The protein belongs to the glycosyl hydrolase 13 family. GlgB subfamily. Monomer.

The enzyme catalyses Transfers a segment of a (1-&gt;4)-alpha-D-glucan chain to a primary hydroxy group in a similar glucan chain.. The protein operates within glycan biosynthesis; glycogen biosynthesis. Its function is as follows. Catalyzes the formation of the alpha-1,6-glucosidic linkages in glycogen by scission of a 1,4-alpha-linked oligosaccharide from growing alpha-1,4-glucan chains and the subsequent attachment of the oligosaccharide to the alpha-1,6 position. The sequence is that of 1,4-alpha-glucan branching enzyme GlgB from Aromatoleum aromaticum (strain DSM 19018 / LMG 30748 / EbN1) (Azoarcus sp. (strain EbN1)).